The following is a 275-amino-acid chain: Lincomycin biosynthesis protein LmbN (275 aa).

Residues 1-78 form the Carrier domain; the sequence is MSTLDEVLAL…AIAATVARIT (78 aa). Ser-37 carries the post-translational modification O-(pantetheine 4'-phosphoryl)serine. One can recognise an SIS domain in the interval 113–275; sequence LFDTWHAGGT…HHALCVAHAP (163 aa).

It participates in antibiotic biosynthesis; lincomycin biosynthesis. In Streptomyces lincolnensis, this protein is Lincomycin biosynthesis protein LmbN (lmbN).